A 69-amino-acid chain; its full sequence is DNA gyrase inhibitor YacG (69 aa).

Residues Cys9, Cys12, Cys28, and Cys32 each contribute to the Zn(2+) site. Residues 48-69 (PVSPDAEDELFSGDLEAPHRGH) are disordered.

It belongs to the DNA gyrase inhibitor YacG family. As to quaternary structure, interacts with GyrB. Zn(2+) serves as cofactor.

Functionally, inhibits all the catalytic activities of DNA gyrase by preventing its interaction with DNA. Acts by binding directly to the C-terminal domain of GyrB, which probably disrupts DNA binding by the gyrase. This is DNA gyrase inhibitor YacG from Pseudomonas syringae pv. syringae (strain B728a).